Here is a 611-residue protein sequence, read N- to C-terminus: Chaperone protein DnaK (611 aa).

Residue T173 is modified to Phosphothreonine; by autocatalysis. Residues 579-592 (AAGQAEGAQGAQDA) are compositionally biased toward low complexity. A disordered region spans residues 579-598 (AAGQAEGAQGAQDAGAKKDN).

Belongs to the heat shock protein 70 family.

In terms of biological role, acts as a chaperone. The chain is Chaperone protein DnaK from Bacillus cereus (strain ATCC 10987 / NRS 248).